The sequence spans 208 residues: Interleukin-6 (208 aa).

Positions 1–29 are cleaved as a signal peptide; sequence MNSLFTSAFSPLAVSLGLLLVMTSAFPTP. Asn38 carries N-linked (GlcNAc...) asparagine glycosylation. A disulfide bond links Cys72 and Cys78. A Phosphoserine modification is found at Ser81. An intrachain disulfide couples Cys101 to Cys111.

This sequence belongs to the IL-6 superfamily. In terms of assembly, component of a hexamer of two molecules each of IL6, IL6R and IL6ST; first binds to IL6R to associate with the signaling subunit IL6ST. Interacts with IL6R (via the N-terminal ectodomain); this interaction may be affected by IL6R-binding with SORL1, hence decreasing IL6 cis signaling. Interacts with SORL1 (via the N-terminal ectodomain); this interaction leads to IL6 internalization and lysosomal degradation. May form a trimeric complex with the soluble SORL1 ectodomain and soluble IL6R receptor; this interaction might stabilize circulating IL6, hence promoting IL6 trans signaling.

It localises to the secreted. Cytokine with a wide variety of biological functions in immunity, tissue regeneration, and metabolism. Binds to IL6R, then the complex associates to the signaling subunit IL6ST/gp130 to trigger the intracellular IL6-signaling pathway. The interaction with the membrane-bound IL6R and IL6ST stimulates 'classic signaling', whereas the binding of IL6 and soluble IL6R to IL6ST stimulates 'trans-signaling'. Alternatively, 'cluster signaling' occurs when membrane-bound IL6:IL6R complexes on transmitter cells activate IL6ST receptors on neighboring receiver cells. In terms of biological role, IL6 is a potent inducer of the acute phase response. Rapid production of IL6 contributes to host defense during infection and tissue injury, but excessive IL6 synthesis is involved in disease pathology. In the innate immune response, is synthesized by myeloid cells, such as macrophages and dendritic cells, upon recognition of pathogens through toll-like receptors (TLRs) at the site of infection or tissue injury. In the adaptive immune response, is required for the differentiation of B cells into immunoglobulin-secreting cells. Plays a major role in the differentiation of CD4(+) T cell subsets. Essential factor for the development of T follicular helper (Tfh) cells that are required for the induction of germinal-center formation. Required to drive naive CD4(+) T cells to the Th17 lineage. Also required for proliferation of myeloma cells and the survival of plasmablast cells. Functionally, acts as an essential factor in bone homeostasis and on vessels directly or indirectly by induction of VEGF, resulting in increased angiogenesis activity and vascular permeability. Induces, through 'trans-signaling' and synergistically with IL1B and TNF, the production of VEGF. Involved in metabolic controls, is discharged into the bloodstream after muscle contraction increasing lipolysis and improving insulin resistance. 'Trans-signaling' in central nervous system also regulates energy and glucose homeostasis. Mediates, through GLP-1, crosstalk between insulin-sensitive tissues, intestinal L cells and pancreatic islets to adapt to changes in insulin demand. Also acts as a myokine. Plays a protective role during liver injury, being required for maintenance of tissue regeneration. Also has a pivotal role in iron metabolism by regulating HAMP/hepcidin expression upon inflammation or bacterial infection. Through activation of IL6ST-YAP-NOTCH pathway, induces inflammation-induced epithelial regeneration. This Capra hircus (Goat) protein is Interleukin-6 (IL6).